Reading from the N-terminus, the 347-residue chain is NADH-ubiquinone oxidoreductase chain 2 (347 aa).

11 consecutive transmembrane segments (helical) span residues 3 to 23 (PPIL…VLMS), 25 to 45 (HWLM…PILM), 59 to 79 (YFLT…INLM), 96 to 116 (TMMT…FWVP), 122 to 142 (VHMS…LLVL), 149 to 169 (IDPN…GWGG), 178 to 198 (ILAY…LYNP), 200 to 220 (MMLL…MLFM), 242 to 262 (SLIL…GFIP), 274 to 294 (EMII…YFYM), and 323 to 343 (MILL…TPLL).

Belongs to the complex I subunit 2 family. As to quaternary structure, core subunit of respiratory chain NADH dehydrogenase (Complex I) which is composed of 45 different subunits. Interacts with TMEM242.

The protein resides in the mitochondrion inner membrane. It carries out the reaction a ubiquinone + NADH + 5 H(+)(in) = a ubiquinol + NAD(+) + 4 H(+)(out). Core subunit of the mitochondrial membrane respiratory chain NADH dehydrogenase (Complex I) that is believed to belong to the minimal assembly required for catalysis. Complex I functions in the transfer of electrons from NADH to the respiratory chain. The immediate electron acceptor for the enzyme is believed to be ubiquinone. This is NADH-ubiquinone oxidoreductase chain 2 from Suricata suricatta (Meerkat).